Reading from the N-terminus, the 475-residue chain is Phosphoglucosamine mutase (475 aa).

Residue S126 is the Phosphoserine intermediate of the active site. Mg(2+) is bound by residues S126, D265, D267, and D269. Phosphoserine is present on S126.

The protein belongs to the phosphohexose mutase family. Mg(2+) serves as cofactor. In terms of processing, activated by phosphorylation.

It catalyses the reaction alpha-D-glucosamine 1-phosphate = D-glucosamine 6-phosphate. Catalyzes the conversion of glucosamine-6-phosphate to glucosamine-1-phosphate. The chain is Phosphoglucosamine mutase from Synechococcus sp. (strain ATCC 27144 / PCC 6301 / SAUG 1402/1) (Anacystis nidulans).